Here is a 509-residue protein sequence, read N- to C-terminus: tRNA-2-methylthio-N(6)-dimethylallyladenosine synthase (509 aa).

Positions 1–21 are disordered; the sequence is MNEKQKLESGQVHPSDKKSEK. The region spanning 66 to 184 is the MTTase N-terminal domain; it reads RKFYIRTYGC…LPELLSEAYL (119 aa). Positions 75, 111, 145, 221, 225, and 228 each coordinate [4Fe-4S] cluster. In terms of domain architecture, Radical SAM core spans 207–437; sequence RNGKIKGWVN…NALVNEISAK (231 aa). The region spanning 440–503 is the TRAM domain; that stretch reads KEYEGKVVEV…TWSLDGEMVG (64 aa).

Belongs to the methylthiotransferase family. MiaB subfamily. In terms of assembly, monomer. It depends on [4Fe-4S] cluster as a cofactor.

The protein localises to the cytoplasm. It catalyses the reaction N(6)-dimethylallyladenosine(37) in tRNA + (sulfur carrier)-SH + AH2 + 2 S-adenosyl-L-methionine = 2-methylsulfanyl-N(6)-dimethylallyladenosine(37) in tRNA + (sulfur carrier)-H + 5'-deoxyadenosine + L-methionine + A + S-adenosyl-L-homocysteine + 2 H(+). The catalysed reaction is N(6)-dimethylallyladenosine(37) in tRNA + (sulfur carrier)-SH + AH2 + S-adenosyl-L-methionine = 2-thio-N(6)-dimethylallyladenosine(37) in tRNA + (sulfur carrier)-H + 5'-deoxyadenosine + L-methionine + A + H(+). It carries out the reaction 2-thio-N(6)-dimethylallyladenosine(37) in tRNA + S-adenosyl-L-methionine = 2-methylsulfanyl-N(6)-dimethylallyladenosine(37) in tRNA + S-adenosyl-L-homocysteine + H(+). Functionally, catalyzes the methylthiolation of N6-(dimethylallyl)adenosine (i(6)A), leading to the formation of 2-methylthio-N6-(dimethylallyl)adenosine (ms(2)i(6)A) at position 37 in tRNAs that read codons beginning with uridine. This is tRNA-2-methylthio-N(6)-dimethylallyladenosine synthase from Bacillus subtilis (strain 168).